Reading from the N-terminus, the 1646-residue chain is MRPPTTPPVPTTAPGRQGATGGLRKRGLRLTPEPGEGGGCSLEARGREEESRQKRRMVAQASGREETEAKENGKVTEAPSDEPQPGTDLVRKTSITNSESLQTVECSEFQSMAFLQSLAKEELVEGIKRRIQIKKCKSSENPPLKITKNEATQNIMVESQDELFKNTPKYSCNSLSPGVEKNCSFESHDFSFLHSEGCNNKNGFEDEPHGVCLHAEENSLKSKKENLRNLAEKDDTKTTKFLKTEKNVIASKLLLEESHLYQNKNNGLTSCLQSEKNKYSVEENNTGRKHRKKMKLSEKEEKGIDLTLSNVCNNSELVLQEHQIGMEGKETETLEHKKSFLKALRKMNHNTLPPVDHLCLPETVGKTSCRHSTNVVLQKTLESSLKEDTKNASETLGCRRLQPEEYFKSMTSSTVKSPSDSHPMGKRSPRGDLKTDTEESKVSCRRIIPMTGKRVWPLYSCARITAECWKKTSLSDLNDSLPGSLGNVRQHDFLMHQTNQTHLPDSKRLQPSLIERTIESSSKEVYDSELSSLSSVSSVEPTLLDIKETIPHDKKTKLEEPSRNGTEVVSSATEDIQLSNITQILTGNKKKKGNLSKLNLTVAPQESQEANNCANKTVHRKACITKQTLVAPDLVKILNTGRLTNFKIPLLKNKTGKRGEVSARSSEREAYSPLELLDSLSGVEAKQNRNKENICTTSGPQSLNIHSVTPGQTSSHTFYNKNSCTSPSFTKKGYDNKTCNHISETGNTISNKESLSIKIENNTFSCDLGYMEQSSFCSKKQEAFVPISSEISGRKMTKSISELKLGFPDILKAYEDDVLLIDVIQDDPELFGISSEGDLSFASEVSKISQEPRVSEEHPSADFKHRHLPGKKEPGDLSKEVALLDPGLLKLEICPSLSAAKEPQHDPKGAAISLEATEETVISENLEDLSEQARASDSDTKCVSSDKATVVEEQENTHEVCKSKDSRSVEAVSTECHLALGPNTLCSSAPPLTLSSHQDVAPAPWTNDFRFPGRYSVLQLQNPETCEIFKREKNFGVFQKPLGLMIPHRYCKLHFNTLRGCERAQCKFVHVPEQGDEKICMDVFKKYIRVNEQRLLHRAAYIFLEYYRKFPPGIHFSLQVLNDLLISLLKHCLLKEVFQVVQLSIMAKMLPALKILLKIFEYVAAMKLRNAVPALIEIFCKFIEAGMIPDPEHLNYIVKLLHQAQASQQEISAVLEAKSRLQVRQLRKNWTCDLDSALSEVENCKEKGDWTKLGNLYISIKMGCEEFADFQRFCACVAETLTEDYKEERPGVPFCEFAETVSKDPQYSEVDKTLLGRIGISAVYFYHRLLLWSKGRKVLDILYELKIHFTSLKGLTGPEKIAPRCQIVNVAAEIFIKSGSLDGAIWVLRESEWITSTPLWPCDRADVLHRHNLLCAIAHEILGKNLYKQTFEVLRNLPGFQNSQEAMGVSQSSLLFNELLDACIESNSLGISSSVADFMVAKSIPIDFSFLRRLITSLGRSCLWLKARAHYKSALSLGCYPPLEGNVYRKLLLVPSYLSEIEMLLAIEIFLVSNASSIQSPGAPTQVLQIVLKRCEESKPRSKDDYQAAVERLIMAARISDPKLFIKHMTVNINKEQVYSLEHCSAVKWLKENMKWAGKVWLFTNH.

Positions 1-11 (MRPPTTPPVPT) are enriched in pro residues. 3 disordered regions span residues 1–90 (MRPP…TDLV), 407–439 (FKSM…DTEE), and 850–877 (QEPR…PGDL). Residues 63–74 (GREETEAKENGK) show a composition bias toward basic and acidic residues. A compositionally biased stretch (polar residues) spans 409 to 420 (SMTSSTVKSPSD). Composition is skewed to basic and acidic residues over residues 429 to 439 (PRGDLKTDTEE) and 853 to 863 (RVSEEHPSADF).

Its subcellular location is the cytoplasm. It is found in the cytosol. In terms of biological role, important for normal spermatogenesis and male fertility. Specifically required for progression to the post-meiotic stages of spermatocyte development. Seems to be necessary for normal expression levels of a number of testis-expressed gene transcripts, although its role in this process is unclear. This chain is Protein TOPAZ1 (Topaz1), found in Rattus norvegicus (Rat).